Consider the following 152-residue polypeptide: S-ribosylhomocysteine lyase (152 aa).

Fe cation-binding residues include His53, His57, and Cys120.

Belongs to the LuxS family. As to quaternary structure, homodimer. The cofactor is Fe cation.

The enzyme catalyses S-(5-deoxy-D-ribos-5-yl)-L-homocysteine = (S)-4,5-dihydroxypentane-2,3-dione + L-homocysteine. Functionally, involved in the synthesis of autoinducer 2 (AI-2) which is secreted by bacteria and is used to communicate both the cell density and the metabolic potential of the environment. The regulation of gene expression in response to changes in cell density is called quorum sensing. Catalyzes the transformation of S-ribosylhomocysteine (RHC) to homocysteine (HC) and 4,5-dihydroxy-2,3-pentadione (DPD). This is S-ribosylhomocysteine lyase from Enterococcus faecalis (strain ATCC 700802 / V583).